The following is a 307-amino-acid chain: Ribonuclease HII (307 aa).

In terms of domain architecture, RNase H type-2 spans 44 to 235 (EPVAGVDEAG…VRRAGGRMEL (192 aa)). Positions 50, 51, and 144 each coordinate a divalent metal cation. Residues 241–307 (ADSDDSPGFA…SRPAELLEIP (67 aa)) are disordered. A compositionally biased stretch (low complexity) spans 250–280 (ASGPAEAVPGPAGSAGAASAAARPAAAGPAG). Positions 287 to 296 (RAADLRDNGD) are enriched in basic and acidic residues.

This sequence belongs to the RNase HII family. The cofactor is Mn(2+). It depends on Mg(2+) as a cofactor.

It is found in the cytoplasm. It catalyses the reaction Endonucleolytic cleavage to 5'-phosphomonoester.. Endonuclease that specifically degrades the RNA of RNA-DNA hybrids. The polypeptide is Ribonuclease HII (Acidothermus cellulolyticus (strain ATCC 43068 / DSM 8971 / 11B)).